The following is a 191-amino-acid chain: Gene BABR protein 1 (191 aa).

The polypeptide is Gene BABR protein 1 (Babesia bovis).